The primary structure comprises 437 residues: GTPase Der (437 aa).

EngA-type G domains follow at residues 3–167 (NIVA…TKKV) and 176–352 (PAIA…DIRQ). GTP-binding positions include 9-16 (GRPNVGKS), 56-60 (DTGGW), 119-122 (NKAD), 182-189 (GKPNVGKS), 229-233 (DTAGI), and 294-297 (NKWD). A KH-like domain is found at 353 to 437 (IKIPTSQLNR…TPINIFMREK (85 aa)).

Belongs to the TRAFAC class TrmE-Era-EngA-EngB-Septin-like GTPase superfamily. EngA (Der) GTPase family. In terms of assembly, associates with the 50S ribosomal subunit.

Its function is as follows. GTPase that plays an essential role in the late steps of ribosome biogenesis. This is GTPase Der from Azobacteroides pseudotrichonymphae genomovar. CFP2.